The chain runs to 292 residues: uncharacterized protein (292 aa).

Active-site charge relay system residues include Thr-43 and Tyr-105. Tyr-131 (proton donor) is an active-site residue. The active-site Schiff-base intermediate with substrate is the Lys-159.

It belongs to the DapA family. In terms of assembly, homotetramer.

The protein resides in the cytoplasm. This is an uncharacterized protein from Thermococcus kodakarensis (strain ATCC BAA-918 / JCM 12380 / KOD1) (Pyrococcus kodakaraensis (strain KOD1)).